The following is a 455-amino-acid chain: Mitochondrial inner membrane magnesium transporter LPE10 (455 aa).

Residues 1 to 56 constitute a mitochondrion transit peptide; that stretch reads MHIKISTDFAIQNLHCTTMIRPLLRLCGQRTAATPFVSFFRPPKKPLSGISFARHY. 2 consecutive transmembrane segments (helical) span residues 365–385 and 396–416; these read FQIGALGLAGGTFIASLYGMN and GFLGVTGVASLLTVWIIAHFL. A YGMN motif is present at residues 382–385; it reads YGMN. Over residues 433 to 444 the composition is skewed to basic and acidic residues; that stretch reads KAMKKKDTVAEK. A disordered region spans residues 433–455; the sequence is KAMKKKDTVAEKRRNHLRNWLTK.

It belongs to the CorA metal ion transporter (MIT) (TC 1.A.35) family. Forms homooligomers. Interacts with MRS2.

The protein resides in the mitochondrion inner membrane. In terms of biological role, mitochondrial inner membrane magnesium transporter required for mitochondrial magnesium homeostasis. Modulates the conductance of the MRS2 channel. Involved in the splicing of mRNA group II introns in mitochondria by affecting mitochondrial magnesium concentrations, which are critical for group II intron splicing. The polypeptide is Mitochondrial inner membrane magnesium transporter LPE10 (LPE10) (Yarrowia lipolytica (strain CLIB 122 / E 150) (Yeast)).